The following is a 442-amino-acid chain: UDP-N-acetylmuramate--L-alanine ligase (442 aa).

Residue 109-115 (GAHGKTS) participates in ATP binding.

This sequence belongs to the MurCDEF family.

The protein resides in the cytoplasm. It carries out the reaction UDP-N-acetyl-alpha-D-muramate + L-alanine + ATP = UDP-N-acetyl-alpha-D-muramoyl-L-alanine + ADP + phosphate + H(+). It participates in cell wall biogenesis; peptidoglycan biosynthesis. Functionally, cell wall formation. The chain is UDP-N-acetylmuramate--L-alanine ligase from Streptococcus pyogenes serotype M28 (strain MGAS6180).